The chain runs to 613 residues: Azole resistance protein 1 (613 aa).

The tract at residues 1 to 38 (MKGEPKTYSMSDLSYYGEKAQQQNEKQQKQYVVRRNST) is disordered. Residues 1–70 (MKGEPKTYSM…PKGFILYASL (70 aa)) are Extracellular-facing. A helical transmembrane segment spans residues 71–91 (IALALSLFLAALDIMIVSTII). Residues 92–102 (EEVAKQFGSYS) lie on the Cytoplasmic side of the membrane. A helical membrane pass occupies residues 103 to 123 (EIGWLFTGYSLPNALLALIWG). The Extracellular portion of the chain corresponds to 124-134 (RIATPIGFKET). A helical membrane pass occupies residues 135–155 (MLFAIVIFEIGSLISALANSM). At 156 to 163 (SMLIGGRV) the chain is on the cytoplasmic side. A helical transmembrane segment spans residues 164 to 184 (IAGVGGCGIQSLSFVIGSTLV). Over 185 to 189 (EESQR) the chain is Extracellular. Residues 190 to 210 (GILIAVLSCSFAIASVVGPFL) form a helical membrane-spanning segment. The Cytoplasmic portion of the chain corresponds to 211-221 (GGVFTSSVTWR). A helical transmembrane segment spans residues 222-242 (WCFYVNLPIGGLAFFLFLFFY). The Extracellular segment spans residues 243-298 (NPGLSTFQETMDNIRKFPSQFIEIVRNVAYHLLKIKGFSKLNGWRKPFMELIFMYD). Residues 299 to 319 (IIEFVFCSAGFTCILLAFTFG) traverse the membrane as a helical segment. The Cytoplasmic segment spans residues 320-329 (GNRYAWNSAS). The helical transmembrane segment at 330-350 (IIILFIIGIVLVVLAGIYDFL) threads the bilayer. Topologically, residues 351–375 (VFPKFNIVKATPHYQPLMSWTNIKK) are extracellular. The helical transmembrane segment at 376-396 (PGIFTVNIALFLTCAGYISQF) threads the bilayer. Topologically, residues 397–414 (TYIVQYFQLIYNDSAWRA) are cytoplasmic. Residues 415–435 (AVHLVACIISTVVTAILCGAI) traverse the membrane as a helical segment. The Extracellular segment spans residues 436–443 (TDKTRQIK). A helical transmembrane segment spans residues 444-464 (PIIVISSIFGVVGAGILTLLN). Over 465–472 (NNANNSAH) the chain is Cytoplasmic. The helical transmembrane segment at 473-493 (IGLLILPGVAFGGLAQSSMLA) threads the bilayer. Residues 494–581 (SQIQLDKKSP…SKLGNIISES (88 aa)) are Extracellular-facing. A helical transmembrane segment spans residues 582-602 (LTDVFYMALGFYALSLIFAVF). At 603–613 (ASNKKVTASLR) the chain is on the cytoplasmic side.

The protein belongs to the major facilitator superfamily.

It is found in the cell membrane. Its function is as follows. Transporter protein required for adaptation to high stress imposed by low-chain organic acids, in particular by acetic acid, and for resistance to azoles, especially to ketoconazole and fluconazole. The polypeptide is Azole resistance protein 1 (AZR1) (Saccharomyces cerevisiae (strain ATCC 204508 / S288c) (Baker's yeast)).